The chain runs to 131 residues: Profilin-6 (131 aa).

Cysteines 13 and 115 form a disulfide. The Involved in PIP2 interaction motif lies at 81–97 (AVIRGKKGAGGITIKKT). Residue threonine 111 is modified to Phosphothreonine.

This sequence belongs to the profilin family. As to quaternary structure, occurs in many kinds of cells as a complex with monomeric actin in a 1:1 ratio. Phosphorylated by MAP kinases.

It is found in the cytoplasm. Its subcellular location is the cytoskeleton. In terms of biological role, binds to actin and affects the structure of the cytoskeleton. At high concentrations, profilin prevents the polymerization of actin, whereas it enhances it at low concentrations. The polypeptide is Profilin-6 (Phleum pratense (Common timothy)).